Here is a 294-residue protein sequence, read N- to C-terminus: F-box protein SKIP3 (294 aa).

Positions 21–67 (SSTLDSLPEGCISNIISFTSPEDACVAAAVSKIFESAVKSDIVWEKF) constitute an F-box domain.

In terms of assembly, part of a SCF (SKP1-cullin-F-box) protein ligase complex. Interacts with SKP1A/ASK1.

The protein operates within protein modification; protein ubiquitination. The protein is F-box protein SKIP3 (SKIP3) of Arabidopsis thaliana (Mouse-ear cress).